The primary structure comprises 610 residues: UvrABC system protein C (610 aa).

A GIY-YIG domain is found at 16 to 94 (SQPGVYRMYD…IKLYQPRYNV (79 aa)). A UVR domain is found at 204–239 (DQVLTQLIARMEKASQDLAFEEAARIRDQIQAVRRV).

Belongs to the UvrC family. As to quaternary structure, interacts with UvrB in an incision complex.

It localises to the cytoplasm. In terms of biological role, the UvrABC repair system catalyzes the recognition and processing of DNA lesions. UvrC both incises the 5' and 3' sides of the lesion. The N-terminal half is responsible for the 3' incision and the C-terminal half is responsible for the 5' incision. The sequence is that of UvrABC system protein C from Salmonella schwarzengrund (strain CVM19633).